The following is a 499-amino-acid chain: Alpha-amylase B (499 aa).

The first 21 residues, 1–21 (MMVAWWSLFLYGLQVAAPALA), serve as a signal peptide directing secretion. Cysteine 51 and cysteine 59 are joined by a disulfide. Substrate contacts are provided by glutamine 56 and tryptophan 104. Asparagine 142 lines the Ca(2+) pocket. Histidine 143 is a binding site for substrate. An intrachain disulfide couples cysteine 171 to cysteine 185. Ca(2+)-binding residues include glutamate 183 and aspartate 196. N-linked (GlcNAc...) asparagine glycosylation occurs at asparagine 218. Arginine 225 is a substrate binding site. The Ca(2+) site is built by aspartate 227, histidine 231, and glutamate 251. Aspartate 227 (nucleophile) is an active-site residue. Position 230 to 231 (230 to 231 (KH)) interacts with substrate. The Proton donor role is filled by glutamate 251. Glycine 255 is a substrate binding site. Cysteine 261 and cysteine 304 are disulfide-bonded. Residues aspartate 318 and arginine 365 each coordinate substrate. Cysteine 461 and cysteine 496 form a disulfide bridge.

The protein belongs to the glycosyl hydrolase 13 family. The cofactor is Ca(2+).

It carries out the reaction Endohydrolysis of (1-&gt;4)-alpha-D-glucosidic linkages in polysaccharides containing three or more (1-&gt;4)-alpha-linked D-glucose units.. The sequence is that of Alpha-amylase B (amyB) from Aspergillus awamori (Black koji mold).